The sequence spans 862 residues: Molybdenum cofactor sulfurase (862 aa).

Residue serine 34 is modified to Phosphoserine. N6-(pyridoxal phosphate)lysine is present on lysine 264. Cysteine 424 is an active-site residue. Serine 517 carries the post-translational modification Phosphoserine. Residues 704–855 (RKTPKKGQPP…LSVGSEVLPV (152 aa)) enclose the MOSC domain.

It belongs to the class-V pyridoxal-phosphate-dependent aminotransferase family. MOCOS subfamily. The cofactor is pyridoxal 5'-phosphate.

The catalysed reaction is Mo-molybdopterin + L-cysteine + AH2 = thio-Mo-molybdopterin + L-alanine + A + H2O. The protein operates within cofactor biosynthesis; molybdopterin biosynthesis. Functionally, sulfurates the molybdenum cofactor. Sulfation of molybdenum is essential for xanthine dehydrogenase (XDH) and aldehyde oxidase (ADO) enzymes in which molybdenum cofactor is liganded by 1 oxygen and 1 sulfur atom in active form. The protein is Molybdenum cofactor sulfurase (Mocos) of Mus musculus (Mouse).